The chain runs to 318 residues: ATP synthase gamma chain (318 aa).

Belongs to the ATPase gamma chain family. In terms of assembly, F-type ATPases have 2 components, CF(1) - the catalytic core - and CF(0) - the membrane proton channel. CF(1) has five subunits: alpha(3), beta(3), gamma(1), delta(1), epsilon(1). CF(0) has three main subunits: a, b and c.

It localises to the cell membrane. Functionally, produces ATP from ADP in the presence of a proton gradient across the membrane. The gamma chain is believed to be important in regulating ATPase activity and the flow of protons through the CF(0) complex. This chain is ATP synthase gamma chain, found in Lactobacillus johnsonii (strain CNCM I-12250 / La1 / NCC 533).